The chain runs to 357 residues: DNA replication and repair protein RecF (357 aa).

Residue 30–37 (GANGSGKT) coordinates ATP.

Belongs to the RecF family.

The protein resides in the cytoplasm. Its function is as follows. The RecF protein is involved in DNA metabolism; it is required for DNA replication and normal SOS inducibility. RecF binds preferentially to single-stranded, linear DNA. It also seems to bind ATP. The chain is DNA replication and repair protein RecF from Cronobacter sakazakii (strain ATCC BAA-894) (Enterobacter sakazakii).